A 159-amino-acid polypeptide reads, in one-letter code: Ribosomal RNA large subunit methyltransferase H (159 aa).

S-adenosyl-L-methionine contacts are provided by residues glycine 108 and 127–132 (FSKMTF).

Belongs to the RNA methyltransferase RlmH family. As to quaternary structure, homodimer.

The protein localises to the cytoplasm. The catalysed reaction is pseudouridine(1915) in 23S rRNA + S-adenosyl-L-methionine = N(3)-methylpseudouridine(1915) in 23S rRNA + S-adenosyl-L-homocysteine + H(+). Its function is as follows. Specifically methylates the pseudouridine at position 1915 (m3Psi1915) in 23S rRNA. The protein is Ribosomal RNA large subunit methyltransferase H of Clostridium acetobutylicum (strain ATCC 824 / DSM 792 / JCM 1419 / IAM 19013 / LMG 5710 / NBRC 13948 / NRRL B-527 / VKM B-1787 / 2291 / W).